Here is a 2452-residue protein sequence, read N- to C-terminus: Lovastatin diketide synthase lovF (2452 aa).

Positions 10–381 (PAPIAVVGMG…GANAHAIVER (372 aa)) constitute a Ketosynthase family 3 (KS3) domain. Residues Cys173, His308, and His343 each act as for beta-ketoacyl synthase activity in the active site. Residues 496-790 (VFTGQGAQWF…PYLSCLSRGK (295 aa)) form a malonyl-CoA:ACP transacylase (MAT) domain region. Ser555 acts as the For malonyltransferase activity in catalysis. Residues 861–998 (HDLIGLQEPL…GLVRVDMDQP (138 aa)) are N-terminal hotdog fold. Residues 861-1166 (HDLIGLQEPL…LEGLVFQSLG (306 aa)) are dehydratase (DH) domain. The PKS/mFAS DH domain maps to 861–1171 (HDLIGLQEPL…FQSLGASLGT (311 aa)). His893 (proton acceptor; for dehydratase activity) is an active-site residue. The tract at residues 997-1017 (QPASSLSNPQRADPRPWSRKT) is disordered. Positions 1012–1171 (PWSRKTAPQD…FQSLGASLGT (160 aa)) are C-terminal hotdog fold. Asp1079 functions as the Proton donor; for dehydratase activity in the catalytic mechanism. A methyltransferase (CMet) domain region spans residues 1343-1528 (ELVRLCCHKN…RDCDSDEFYM (186 aa)). Residues 1745 to 2064 (GLLDSLYFRK…SGQHVGKIVV (320 aa)) form an enoylreductase (ER) domain region. Positions 2088–2260 (SYLVAGGLGG…AVTIDLGMVQ (173 aa)) are ketoreductase (KR) domain. The Carrier domain maps to 2373-2450 (ASIAVIMEAM…KVAEVVLQRY (78 aa)). At Ser2410 the chain carries O-(pantetheine 4'-phosphoryl)serine.

As to quaternary structure, interacts with LovD. Pantetheine 4'-phosphate serves as cofactor.

The enzyme catalyses holo-[2-methylbutanoate polyketide synthase] + 2 malonyl-CoA + S-adenosyl-L-methionine + 2 NADPH + 3 H(+) = (S)-2-methylbutanoyl-[2-methylbutanoate polyketide synthase] + S-adenosyl-L-homocysteine + 2 CO2 + 2 NADP(+) + 2 CoA + H2O. It functions in the pathway polyketide biosynthesis; lovastatin biosynthesis. Lovastatin diketide synthase; part of the gene cluster that mediates the biosynthesis of lovastatin (also known as mevinolin, mevacor or monacolin K), a hypolipidemic inhibitor of (3S)-hydroxymethylglutaryl-coenzyme A (HMG-CoA) reductase (HMGR). The first step in the biosynthesis of lovastatin is the production of dihydromonacolin L acid by the lovastatin nonaketide synthase lovB and the trans-acting enoyl reductase lovC via condensation of one acetyl-CoA unit and 8 malonyl-CoA units. Dihydromonacolin L acid is released from lovB by the thioesterase lovG. Next, dihydromonacolin L acid is oxidized by the dihydromonacolin L monooxygenase lovA twice to form monacolin J acid. The 2-methylbutyrate moiety of lovastatin is synthesized by the lovastatin diketide synthase lovF via condensation of one acetyl-CoA unit and one malonyl-CoA unit. Finally, the covalent attachment of this moiety to monacolin J acid is catalyzed by the transesterase lovD to yield lovastatin. LovD has broad substrate specificity and can also convert monacolin J to simvastatin using alpha-dimethylbutanoyl-S-methyl-3-mercaptopropionate (DMB-S-MMP) as the thioester acyl donor, and can also catalyze the reverse reaction and function as hydrolase in vitro. LovD has much higher activity with LovF-bound 2-methylbutanoate than with free diketide substrates. This chain is Lovastatin diketide synthase lovF, found in Aspergillus terreus (strain NIH 2624 / FGSC A1156).